The chain runs to 467 residues: Mitochondrial distribution and morphology protein 10 (467 aa).

Residues 361 to 393 (GLPDTAPSRNRECDDLPPPRRDNYHHQRSPHAS) are disordered. A compositionally biased stretch (basic and acidic residues) spans 369 to 385 (RNRECDDLPPPRRDNYH).

This sequence belongs to the MDM10 family. As to quaternary structure, component of the ER-mitochondria encounter structure (ERMES) or MDM complex, composed of MMM1, MDM10, MDM12 and MDM34. Associates with the mitochondrial outer membrane sorting assembly machinery SAM(core) complex.

Its subcellular location is the mitochondrion outer membrane. In terms of biological role, component of the ERMES/MDM complex, which serves as a molecular tether to connect the endoplasmic reticulum and mitochondria. Components of this complex are involved in the control of mitochondrial shape and protein biogenesis and may function in phospholipid exchange. MDM10 is involved in the late assembly steps of the general translocase of the mitochondrial outer membrane (TOM complex). Functions in the TOM40-specific route of the assembly of outer membrane beta-barrel proteins, including the association of TOM40 with the receptor TOM22 and small TOM proteins. Can associate with the SAM(core) complex as well as the MDM12-MMM1 complex, both involved in late steps of the major beta-barrel assembly pathway, that is responsible for biogenesis of all outer membrane beta-barrel proteins. May act as a switch that shuttles between both complexes and channels precursor proteins into the TOM40-specific pathway. Plays a role in mitochondrial morphology and in the inheritance of mitochondria. This is Mitochondrial distribution and morphology protein 10 from Ajellomyces capsulatus (strain NAm1 / WU24) (Darling's disease fungus).